The sequence spans 208 residues: Na(+)-translocating NADH-quinone reductase subunit D (208 aa).

Transmembrane regions (helical) follow at residues 42–62 (FVMA…VSLI), 72–92 (IIVQ…ILKA), 103–123 (VFVG…AFAM), 131–151 (FVDG…VAFF), and 178–198 (NGLF…IWGL).

Belongs to the NqrDE/RnfAE family. Composed of six subunits; NqrA, NqrB, NqrC, NqrD, NqrE and NqrF.

It localises to the cell inner membrane. It catalyses the reaction a ubiquinone + n Na(+)(in) + NADH + H(+) = a ubiquinol + n Na(+)(out) + NAD(+). In terms of biological role, NQR complex catalyzes the reduction of ubiquinone-1 to ubiquinol by two successive reactions, coupled with the transport of Na(+) ions from the cytoplasm to the periplasm. NqrA to NqrE are probably involved in the second step, the conversion of ubisemiquinone to ubiquinol. The polypeptide is Na(+)-translocating NADH-quinone reductase subunit D (Haemophilus influenzae (strain 86-028NP)).